Reading from the N-terminus, the 130-residue chain is Large-conductance mechanosensitive channel (130 aa).

2 consecutive transmembrane segments (helical) span residues 14 to 34 and 73 to 93; these read IIDL…VTSF and FVDF…LVKF.

It belongs to the MscL family. As to quaternary structure, homopentamer.

The protein resides in the cell membrane. Functionally, channel that opens in response to stretch forces in the membrane lipid bilayer. May participate in the regulation of osmotic pressure changes within the cell. This chain is Large-conductance mechanosensitive channel, found in Oceanobacillus iheyensis (strain DSM 14371 / CIP 107618 / JCM 11309 / KCTC 3954 / HTE831).